The primary structure comprises 876 residues: Valine--tRNA ligase (876 aa).

The 'HIGH' region signature appears at 44–54; it reads PNVTGKLHLGH. Positions 520 to 524 match the 'KMSKS' region motif; that stretch reads KMSKS. Lys-523 contacts ATP. A coiled-coil region spans residues 805-876; it reads LEGLIDMDKE…VKARIEQLKA (72 aa).

Belongs to the class-I aminoacyl-tRNA synthetase family. ValS type 1 subfamily. As to quaternary structure, monomer.

It localises to the cytoplasm. The enzyme catalyses tRNA(Val) + L-valine + ATP = L-valyl-tRNA(Val) + AMP + diphosphate. Its function is as follows. Catalyzes the attachment of valine to tRNA(Val). As ValRS can inadvertently accommodate and process structurally similar amino acids such as threonine, to avoid such errors, it has a 'posttransfer' editing activity that hydrolyzes mischarged Thr-tRNA(Val) in a tRNA-dependent manner. The polypeptide is Valine--tRNA ligase (Staphylococcus aureus (strain Mu3 / ATCC 700698)).